Consider the following 446-residue polypeptide: BAG family molecular chaperone regulator 7 (446 aa).

The segment at 230-252 (TGGEKKKKHEEKEKKEKIETKSK) is disordered. Basic and acidic residues predominate over residues 239–250 (EEKEKKEKIETK). The 30-residue stretch at 303–332 (PEYAAVMIQRAFKAYLIRRSKSLRALRDLA) folds into the IQ domain. Positions 330–407 (DLAIAKTKLK…AMLDVVDPQP (78 aa)) constitute a BAG domain. At T443 the chain carries Phosphothreonine.

Binds to the ATPase domain of HSP70/HSC70 chaperones. Interacts with HSP70-11/BIP2.

It localises to the endoplasmic reticulum. Its function is as follows. Co-chaperone that regulates diverse cellular pathways, such as programmed cell death and stress responses. Necessary for the proper maintenance of the unfolded protein response (UPR) during heat and cold tolerance. This chain is BAG family molecular chaperone regulator 7 (BAG7), found in Arabidopsis thaliana (Mouse-ear cress).